Here is a 372-residue protein sequence, read N- to C-terminus: Geranylgeranyl pyrophosphate synthase 4 (372 aa).

The signal sequence occupies residues 1–22; sequence MEAQNIFLYLLIVFLSLHFVFT. Residues lysine 121, arginine 124, and histidine 153 each contribute to the isopentenyl diphosphate site. Residues aspartate 160 and aspartate 166 each contribute to the Mg(2+) site. Arginine 171 contacts dimethylallyl diphosphate. Arginine 172 is a binding site for isopentenyl diphosphate. Dimethylallyl diphosphate-binding residues include lysine 257, threonine 258, glutamine 295, lysine 312, and lysine 322.

The protein belongs to the FPP/GGPP synthase family. In terms of assembly, monomer. Mg(2+) is required as a cofactor. In terms of tissue distribution, faintly expressed in flowers. Expressed in roots and siliques.

Its subcellular location is the endoplasmic reticulum. It catalyses the reaction isopentenyl diphosphate + dimethylallyl diphosphate = (2E)-geranyl diphosphate + diphosphate. The catalysed reaction is isopentenyl diphosphate + (2E)-geranyl diphosphate = (2E,6E)-farnesyl diphosphate + diphosphate. The enzyme catalyses isopentenyl diphosphate + (2E,6E)-farnesyl diphosphate = (2E,6E,10E)-geranylgeranyl diphosphate + diphosphate. It functions in the pathway isoprenoid biosynthesis; farnesyl diphosphate biosynthesis; farnesyl diphosphate from geranyl diphosphate and isopentenyl diphosphate: step 1/1. It participates in isoprenoid biosynthesis; geranyl diphosphate biosynthesis; geranyl diphosphate from dimethylallyl diphosphate and isopentenyl diphosphate: step 1/1. Its pathway is isoprenoid biosynthesis; geranylgeranyl diphosphate biosynthesis; geranylgeranyl diphosphate from farnesyl diphosphate and isopentenyl diphosphate: step 1/1. In terms of biological role, catalyzes the trans-addition of the three molecules of isopentenyl diphosphate (IPP) onto dimethylallyl diphosphate (DMAPP) to form geranylgeranyl diphosphate. The polypeptide is Geranylgeranyl pyrophosphate synthase 4 (Arabidopsis thaliana (Mouse-ear cress)).